The following is a 98-amino-acid chain: Trp operon repressor homolog (98 aa).

A DNA-binding region spans residues 59-82 (QRQVSQMLGVGVATITRGSNELKA).

It belongs to the TrpR family. As to quaternary structure, homodimer.

Its subcellular location is the cytoplasm. Its function is as follows. This protein is an aporepressor. When complexed with L-tryptophan it binds the operator region of the trp operon and prevents the initiation of transcription. This is Trp operon repressor homolog from Vibrio atlanticus (strain LGP32) (Vibrio splendidus (strain Mel32)).